The chain runs to 2293 residues: Protein Ycf2 A (2293 aa).

1647 to 1654 contributes to the ATP binding site; the sequence is GSIGTGRS.

Belongs to the Ycf2 family.

It localises to the plastid. It is found in the chloroplast stroma. In terms of biological role, probable ATPase of unknown function. Its presence in a non-photosynthetic plant (Epifagus virginiana) and experiments in tobacco indicate that it has an essential function which is probably not related to photosynthesis. This chain is Protein Ycf2 A, found in Crucihimalaya wallichii (Rock-cress).